Consider the following 503-residue polypeptide: Maturase K (503 aa).

This sequence belongs to the intron maturase 2 family. MatK subfamily.

Its subcellular location is the plastid. It is found in the chloroplast. Its function is as follows. Usually encoded in the trnK tRNA gene intron. Probably assists in splicing its own and other chloroplast group II introns. This Actinodium cunninghamii (Albany daisy) protein is Maturase K.